The primary structure comprises 189 residues: Probable UbiX-like flavin prenyltransferase (189 aa).

Residues 9–11 (GAS), Ser36, 87–90 (SMKT), and Arg122 contribute to the FMN site.

Belongs to the UbiX/PAD1 family. YclB subfamily. In terms of assembly, homododecamer.

It carries out the reaction dimethylallyl phosphate + FMNH2 = prenylated FMNH2 + phosphate. Involved in the non-oxidative decarboxylation and detoxification of phenolic derivatives under anaerobic conditions. Flavin prenyltransferase that catalyzes the synthesis of the prenylated FMN cofactor (prenyl-FMN) for phenolic acid decarboxylase. The protein is Probable UbiX-like flavin prenyltransferase of Sedimentibacter hydroxybenzoicus (Clostridium hydroxybenzoicum).